We begin with the raw amino-acid sequence, 37 residues long: Cytochrome b6-f complex subunit 5 (37 aa).

The helical transmembrane segment at 5 to 25 (LLDGLVLGLVFATLGGLFYAA) threads the bilayer.

It belongs to the PetG family. In terms of assembly, the 4 large subunits of the cytochrome b6-f complex are cytochrome b6, subunit IV (17 kDa polypeptide, PetD), cytochrome f and the Rieske protein, while the 4 small subunits are PetG, PetL, PetM and PetN. The complex functions as a dimer.

The protein resides in the cellular thylakoid membrane. In terms of biological role, component of the cytochrome b6-f complex, which mediates electron transfer between photosystem II (PSII) and photosystem I (PSI), cyclic electron flow around PSI, and state transitions. PetG is required for either the stability or assembly of the cytochrome b6-f complex. This chain is Cytochrome b6-f complex subunit 5, found in Mastigocladus laminosus (Fischerella sp.).